The chain runs to 138 residues: Pleckstrin homology-like domain family A member 2 (138 aa).

The 95-residue stretch at 11 to 105 folds into the PH domain; the sequence is VLKEGELEKR…WNAVITMALI (95 aa). Residues 117–138 form a disordered region; it reads KTRQDDESGSPGQHESRMARAP.

It belongs to the PHLDA2 family.

The protein localises to the cytoplasm. It is found in the membrane. In terms of biological role, plays a role in regulating placenta growth. May act via its PH domain that competes with other PH domain-containing proteins, thereby preventing their binding to membrane lipids. This Salmo salar (Atlantic salmon) protein is Pleckstrin homology-like domain family A member 2 (phlda2).